The chain runs to 147 residues: Male-specific protein scotti (147 aa).

The interval 57-76 (EPPLGVFPAQGGPNGPPRLR) is disordered. N-linked (GlcNAc...) asparagine glycosylation is present at Asn128.

It belongs to the male-specific scotti family.

In terms of biological role, post-meiotically transcribed gene that has a role in late spermiogenesis; required for actin cone progression during spermatid individualization. The polypeptide is Male-specific protein scotti (Drosophila simulans (Fruit fly)).